The chain runs to 343 residues: L-threonine 3-dehydrogenase (343 aa).

Position 40 (C40) interacts with Zn(2+). Catalysis depends on charge relay system residues T42 and H45. Zn(2+) contacts are provided by H65, E66, C95, C98, C101, and C109. Residues I177, D197, R202, 264–266 (LGI), and 288–289 (IY) each bind NAD(+).

The protein belongs to the zinc-containing alcohol dehydrogenase family. As to quaternary structure, homotetramer. Zn(2+) is required as a cofactor.

The protein resides in the cytoplasm. The catalysed reaction is L-threonine + NAD(+) = (2S)-2-amino-3-oxobutanoate + NADH + H(+). Its pathway is amino-acid degradation; L-threonine degradation via oxydo-reductase pathway; glycine from L-threonine: step 1/2. Catalyzes the NAD(+)-dependent oxidation of L-threonine to 2-amino-3-ketobutyrate. This is L-threonine 3-dehydrogenase from Aliivibrio fischeri (strain ATCC 700601 / ES114) (Vibrio fischeri).